Here is a 428-residue protein sequence, read N- to C-terminus: Light-independent protochlorophyllide reductase subunit N (428 aa).

Residues C30, C55, and C116 each coordinate [4Fe-4S] cluster.

The protein belongs to the BchN/ChlN family. In terms of assembly, protochlorophyllide reductase is composed of three subunits; BchL, BchN and BchB. Forms a heterotetramer of two BchB and two BchN subunits. Requires [4Fe-4S] cluster as cofactor.

The enzyme catalyses chlorophyllide a + oxidized 2[4Fe-4S]-[ferredoxin] + 2 ADP + 2 phosphate = protochlorophyllide a + reduced 2[4Fe-4S]-[ferredoxin] + 2 ATP + 2 H2O. It participates in porphyrin-containing compound metabolism; bacteriochlorophyll biosynthesis (light-independent). In terms of biological role, component of the dark-operative protochlorophyllide reductase (DPOR) that uses Mg-ATP and reduced ferredoxin to reduce ring D of protochlorophyllide (Pchlide) to form chlorophyllide a (Chlide). This reaction is light-independent. The NB-protein (BchN-BchB) is the catalytic component of the complex. This Bradyrhizobium sp. (strain BTAi1 / ATCC BAA-1182) protein is Light-independent protochlorophyllide reductase subunit N.